The following is a 230-amino-acid chain: MFRPLLSLCLALLVSAPAHADNIQTFRAAKQDLNKLYQSHPVTFYCGCNIKFSGKKMAPDWESCGYLPGKQAERASRIEWEHVVPAWEFGHQLQCWQDGGRKNCGKSDEFNRMEGDMHNLFPAIGEVNGDRANFRFSDWNGKPNQYGKCQMLVDFKERQVQPPKGPVRGQIARAYLYMSQQYGLRLAAQQRKLYEAWDRQYPADRWECERNRRIGKLQGNTNPFIEKQCQ.

Residues 1-20 (MFRPLLSLCLALLVSAPAHA) form the signal peptide.

Belongs to the EndA/NucM nuclease family.

It localises to the secreted. The chain is Extracellular deoxyribonuclease (dns) from Aeromonas hydrophila.